Consider the following 291-residue polypeptide: N-acetylmannosamine kinase (291 aa).

ATP-binding positions include 5–12 and 132–139; these read AIDIGGTK and GVGGGVVS. Zn(2+) is bound by residues His-156, Cys-166, Cys-168, and Cys-173.

Belongs to the ROK (NagC/XylR) family. NanK subfamily. In terms of assembly, homodimer.

It catalyses the reaction an N-acyl-D-mannosamine + ATP = an N-acyl-D-mannosamine 6-phosphate + ADP + H(+). The protein operates within amino-sugar metabolism; N-acetylneuraminate degradation; D-fructose 6-phosphate from N-acetylneuraminate: step 2/5. Catalyzes the phosphorylation of N-acetylmannosamine (ManNAc) to ManNAc-6-P. The protein is N-acetylmannosamine kinase of Shigella boydii serotype 18 (strain CDC 3083-94 / BS512).